We begin with the raw amino-acid sequence, 284 residues long: Bifunctional protein FolD (284 aa).

NADP(+) is bound by residues 165-167 (GAS), isoleucine 190, and isoleucine 231.

It belongs to the tetrahydrofolate dehydrogenase/cyclohydrolase family. Homodimer.

The catalysed reaction is (6R)-5,10-methylene-5,6,7,8-tetrahydrofolate + NADP(+) = (6R)-5,10-methenyltetrahydrofolate + NADPH. It catalyses the reaction (6R)-5,10-methenyltetrahydrofolate + H2O = (6R)-10-formyltetrahydrofolate + H(+). The protein operates within one-carbon metabolism; tetrahydrofolate interconversion. Functionally, catalyzes the oxidation of 5,10-methylenetetrahydrofolate to 5,10-methenyltetrahydrofolate and then the hydrolysis of 5,10-methenyltetrahydrofolate to 10-formyltetrahydrofolate. The protein is Bifunctional protein FolD of Alkaliphilus metalliredigens (strain QYMF).